The sequence spans 365 residues: Bifunctional chorismate mutase/prephenate dehydratase (365 aa).

The 96-residue stretch at 1–96 folds into the Chorismate mutase domain; the sequence is MADQDQLKAL…SCLALEQPLK (96 aa). Arg11, Arg28, Lys39, and Glu57 together coordinate substrate. Residues 97-272 enclose the Prephenate dehydratase domain; sequence VAYLGPEGTF…NSTRFLIIGN (176 aa). Residues 284–361 form the ACT domain; the sequence is SIIVSMRNKP…VALKVLGSYP (78 aa).

The protein localises to the cytoplasm. It carries out the reaction chorismate = prephenate. The catalysed reaction is prephenate + H(+) = 3-phenylpyruvate + CO2 + H2O. The protein operates within amino-acid biosynthesis; L-phenylalanine biosynthesis; phenylpyruvate from prephenate: step 1/1. It participates in metabolic intermediate biosynthesis; prephenate biosynthesis; prephenate from chorismate: step 1/1. Its function is as follows. Catalyzes the Claisen rearrangement of chorismate to prephenate and the decarboxylation/dehydration of prephenate to phenylpyruvate. This is Bifunctional chorismate mutase/prephenate dehydratase (pheA) from Pseudomonas aeruginosa (strain ATCC 15692 / DSM 22644 / CIP 104116 / JCM 14847 / LMG 12228 / 1C / PRS 101 / PAO1).